The primary structure comprises 677 residues: Methionine--tRNA ligase (677 aa).

The 'HIGH' region motif lies at 15–25 (PYANGSIHLGH). Zn(2+) contacts are provided by Cys-146, Cys-149, Cys-159, and Cys-162. Residues 333-337 (KMSKS) carry the 'KMSKS' region motif. Lys-336 contacts ATP. The region spanning 575-677 (DFAKVDLRVA…DGAKPGQQVK (103 aa)) is the tRNA-binding domain.

It belongs to the class-I aminoacyl-tRNA synthetase family. MetG type 1 subfamily. Homodimer. Zn(2+) is required as a cofactor.

The protein resides in the cytoplasm. The catalysed reaction is tRNA(Met) + L-methionine + ATP = L-methionyl-tRNA(Met) + AMP + diphosphate. Is required not only for elongation of protein synthesis but also for the initiation of all mRNA translation through initiator tRNA(fMet) aminoacylation. The protein is Methionine--tRNA ligase of Salmonella arizonae (strain ATCC BAA-731 / CDC346-86 / RSK2980).